A 248-amino-acid polypeptide reads, in one-letter code: tRNA (guanine-N(1)-)-methyltransferase (248 aa).

S-adenosyl-L-methionine-binding positions include Gly113 and 133 to 138 (IGDYVL).

Belongs to the RNA methyltransferase TrmD family. As to quaternary structure, homodimer.

Its subcellular location is the cytoplasm. The enzyme catalyses guanosine(37) in tRNA + S-adenosyl-L-methionine = N(1)-methylguanosine(37) in tRNA + S-adenosyl-L-homocysteine + H(+). Its function is as follows. Specifically methylates guanosine-37 in various tRNAs. The sequence is that of tRNA (guanine-N(1)-)-methyltransferase from Shewanella frigidimarina (strain NCIMB 400).